A 376-amino-acid polypeptide reads, in one-letter code: N-acetyldiaminopimelate deacetylase (376 aa).

D69 is a catalytic residue. The Proton acceptor role is filled by E128.

The protein belongs to the peptidase M20A family. N-acetyldiaminopimelate deacetylase subfamily.

The catalysed reaction is N-acetyl-(2S,6S)-2,6-diaminopimelate + H2O = (2S,6S)-2,6-diaminopimelate + acetate. Its pathway is amino-acid biosynthesis; L-lysine biosynthesis via DAP pathway; LL-2,6-diaminopimelate from (S)-tetrahydrodipicolinate (acetylase route): step 3/3. Its function is as follows. Catalyzes the conversion of N-acetyl-diaminopimelate to diaminopimelate and acetate. This is N-acetyldiaminopimelate deacetylase from Bacillus cereus (strain 03BB102).